The following is a 579-amino-acid chain: Putative adenine deaminase OB0751 (579 aa).

This sequence belongs to the metallo-dependent hydrolases superfamily. Adenine deaminase family.

It catalyses the reaction adenine + H2O + H(+) = hypoxanthine + NH4(+). This is Putative adenine deaminase OB0751 from Oceanobacillus iheyensis (strain DSM 14371 / CIP 107618 / JCM 11309 / KCTC 3954 / HTE831).